We begin with the raw amino-acid sequence, 443 residues long: Glucose-6-phosphate isomerase (443 aa).

Glutamate 285 serves as the catalytic Proton donor. Residues histidine 306 and lysine 420 contribute to the active site.

It belongs to the GPI family.

Its subcellular location is the cytoplasm. The enzyme catalyses alpha-D-glucose 6-phosphate = beta-D-fructose 6-phosphate. It functions in the pathway carbohydrate biosynthesis; gluconeogenesis. It participates in carbohydrate degradation; glycolysis; D-glyceraldehyde 3-phosphate and glycerone phosphate from D-glucose: step 2/4. In terms of biological role, catalyzes the reversible isomerization of glucose-6-phosphate to fructose-6-phosphate. This is Glucose-6-phosphate isomerase from Staphylococcus saprophyticus subsp. saprophyticus (strain ATCC 15305 / DSM 20229 / NCIMB 8711 / NCTC 7292 / S-41).